We begin with the raw amino-acid sequence, 349 residues long: MMRWGRKKPVSSSSSSGLSRALPVSWFSKLSGSSDLKPAKEKKQDEKASQNISVKTSLSSTTRRSDIHENSKRFQRVSVEKENSATRSADKESNEKFEEIMSSVRKKVRDFQKETCGFLEVEAMDRDNGTVILTPRIQVNRDKQRCERRDQRLLEQKPKRSEQDAGVKVKKPARRTGTGGYSREDSVILGHTITKPAHQWEKLKEVKLREVKLKADQQRKSLYLKRELNRIGTKENNKVRVFSPRASEKCRVKAIEDLKKAKQRAREHELLIETADGGMENESFAVVKCSSDPQKDFRDSMIEMIMENGINHPEELKELLVCYLRLNTDEYHDMIISVFQQVHNDFNFH.

Disordered regions lie at residues 1–20 (MMRW…GLSR), 29–94 (KLSG…KESN), and 143–183 (KQRC…GYSR). Residues 10–20 (VSSSSSSGLSR) are compositionally biased toward low complexity. A compositionally biased stretch (basic and acidic residues) spans 37 to 48 (KPAKEKKQDEKA). Over residues 49 to 62 (SQNISVKTSLSSTT) the composition is skewed to polar residues. 2 stretches are compositionally biased toward basic and acidic residues: residues 63–94 (RRSD…KESN) and 143–167 (KQRC…DAGV). One can recognise an OVATE domain in the interval 286 to 345 (VVKCSSDPQKDFRDSMIEMIMENGINHPEELKELLVCYLRLNTDEYHDMIISVFQQVHND).

As to quaternary structure, interacts with BLH1, BLH2, BLH3, BLH4, BLH6 and BLH10. In terms of tissue distribution, expressed in roots, rosette and cauline leaves, and flower buds.

The protein resides in the nucleus. Transcriptional repressor that regulates multiple aspects of plant growth and development through the regulation of BEL1-LIKE (BLH) and KNOX TALE (KNAT) homeodomain transcription factors. Required for embryo development. The chain is Transcription repressor OFP5 (OFP5) from Arabidopsis thaliana (Mouse-ear cress).